A 311-amino-acid chain; its full sequence is Beta-ketoacyl-[acyl-carrier-protein] synthase III (311 aa).

Residues cysteine 114 and histidine 238 contribute to the active site. The ACP-binding stretch occupies residues 239–243; the sequence is QANIR. The active site involves asparagine 268.

Belongs to the thiolase-like superfamily. FabH family. In terms of assembly, homodimer.

It localises to the cytoplasm. The enzyme catalyses malonyl-[ACP] + acetyl-CoA + H(+) = 3-oxobutanoyl-[ACP] + CO2 + CoA. The protein operates within lipid metabolism; fatty acid biosynthesis. In terms of biological role, catalyzes the condensation reaction of fatty acid synthesis by the addition to an acyl acceptor of two carbons from malonyl-ACP. Catalyzes the first condensation reaction which initiates fatty acid synthesis and may therefore play a role in governing the total rate of fatty acid production. Possesses both acetoacetyl-ACP synthase and acetyl transacylase activities. Its substrate specificity determines the biosynthesis of branched-chain and/or straight-chain of fatty acids. The protein is Beta-ketoacyl-[acyl-carrier-protein] synthase III of Neorickettsia sennetsu (strain ATCC VR-367 / Miyayama) (Ehrlichia sennetsu).